The sequence spans 309 residues: MILTVTLNPAIDVSYPLDELKCDTVNRVVDVTKTPGDKGLNVCRVLNDFGETVKATGCIGGESGDFIINHLPDSILSRFYKISGDTRTCIAILHEGNQTEILEKGPLLSVEEIDGFTHHFKYLLNDVDVVTLSGSLPAGMPDDYYQKLIGIANLNGKKTVLDCSGNALEAVLKGDSKPTVIKPNLEELSQLLGKEMTKDFEALKEVLQDELFEGIEWIIVSLGADGVFAKHNDTFYNVDIPKIEIVSAVGSGDSTVAGIASGLANDEDDRALLTKANVLGMLNAQEKTTGHVNMANYDKLYQSIKVKEV.

It belongs to the carbohydrate kinase PfkB family. LacC subfamily.

It catalyses the reaction D-tagatofuranose 6-phosphate + ATP = D-tagatofuranose 1,6-bisphosphate + ADP + H(+). The protein operates within carbohydrate metabolism; D-tagatose 6-phosphate degradation; D-glyceraldehyde 3-phosphate and glycerone phosphate from D-tagatose 6-phosphate: step 1/2. The sequence is that of Tagatose-6-phosphate kinase from Streptococcus pyogenes serotype M4 (strain MGAS10750).